We begin with the raw amino-acid sequence, 639 residues long: UvrABC system protein C (639 aa).

Residues 20 to 97 (ERSGVYRMFD…IKKFQPKFNI (78 aa)) form the GIY-YIG domain. The UVR domain maps to 207-242 (KELQENLSRKMEELSSQMRFEEAAEIRDRIKALSYV).

Belongs to the UvrC family. In terms of assembly, interacts with UvrB in an incision complex.

It localises to the cytoplasm. Its function is as follows. The UvrABC repair system catalyzes the recognition and processing of DNA lesions. UvrC both incises the 5' and 3' sides of the lesion. The N-terminal half is responsible for the 3' incision and the C-terminal half is responsible for the 5' incision. The protein is UvrABC system protein C of Rickettsia peacockii (strain Rustic).